The primary structure comprises 1862 residues: Ankyrin-1 (1862 aa).

The 89 kDa domain stretch occupies residues 1–827; it reads MGFCKADAAT…DELVGSKAER (827 aa). ANK repeat units follow at residues 40 to 69, 73 to 102, 106 to 135, 139 to 168, 170 to 197, 201 to 230, 234 to 263, 267 to 296, 300 to 329, 333 to 362, 366 to 395, 399 to 428, 432 to 461, 465 to 494, 498 to 527, 531 to 560, 564 to 593, 597 to 626, 630 to 659, 663 to 692, 696 to 725, 729 to 758, and 762 to 791; these read NGLN…ILET, KGNT…NVNA, KGFT…NQNV, DGFT…KGKV, LPAL…NPDV, TGFT…SVNF, NGIT…QIET, DELT…PIQA, NGLS…EIDD, DHLT…KPNS, NGFT…SIDA, SGLT…SPNV, KVET…KANA, DDQT…SPNL, AGHT…SQAC, KGFT…HPNA, NGLT…SPHS, NGYT…SANA, QGVT…NGNL, SGLT…TVDA, MGYT…DVNA, LGYS…SPNE, and NGTT…ETSV. Lysine 55 carries the phosphoserine modification. Asparagine 101 bears the (3S)-3-hydroxyasparagine; by HIF1AN; partial mark. The residue at position 229 (asparagine 229) is a (3S)-3-hydroxyasparagine; by HIF1AN. Phosphoserine is present on serine 425. Asparagine 427 and asparagine 460 each carry (3S)-3-hydroxyasparagine; by HIF1AN. 2 positions are modified to (3S)-3-hydroxyasparagine; by HIF1AN: asparagine 625 and asparagine 658. Residue aspartate 691 is modified to (3S)-3-hydroxyaspartate; by HIF1AN. Asparagine 724 carries the post-translational modification (3S)-3-hydroxyasparagine; by HIF1AN. At serine 755 the chain carries Phosphoserine. Position 757 is a (3S)-3-hydroxyasparagine; by HIF1AN (asparagine 757). Residues serine 777, serine 813, serine 830, and serine 852 each carry the phosphoserine modification. The interval 812 to 834 is disordered; it reads VSEDEGDELVGSKAERRDSRDVG. Positions 824–834 are enriched in basic and acidic residues; that stretch reads KAERRDSRDVG. Threonine 862 carries the phosphothreonine modification. The disordered stretch occupies residues 872-900; the sequence is DQEQASKEYDEDSLIPSSPATETSDNISP. Over residues 886 to 900 the composition is skewed to polar residues; that stretch reads IPSSPATETSDNISP. ZU5 domains follow at residues 909–1064 and 1066–1212; these read FLVS…IMSR and CQDY…LSDC. Residue threonine 957 is modified to Phosphothreonine. Position 1069 is a phosphotyrosine (tyrosine 1069). Residue serine 1078 is modified to Phosphoserine. Residues 1197 to 1331 are UPA domain; that stretch reads ANFTTNVSAR…PVKVRDSSRE (135 aa). 2 positions are modified to phosphothreonine: threonine 1374 and threonine 1376. Phosphoserine is present on residues serine 1386 and serine 1388. A 55 kDa regulatory domain region spans residues 1387 to 1862; sequence ESRLGFTSDT…KRASLKRGKQ (476 aa). Phosphothreonine is present on threonine 1396. One can recognise a Death domain in the interval 1399–1483; the sequence is VEMRMAVIRE…EIVNMLEGSG (85 aa). A phosphoserine mark is found at serine 1424, serine 1473, and serine 1482. Residues 1481–1506 are disordered; sequence GSGRQSRNLKPERRHGDREYSLSPSQ. Over residues 1489–1500 the composition is skewed to basic and acidic residues; the sequence is LKPERRHGDREY. A phosphoserine mark is found at serine 1519, serine 1529, and serine 1612. Disordered regions lie at residues 1598 to 1720 and 1744 to 1767; these read EGAH…GPHS and VSTR…KEPS. The span at 1637–1647 shows a compositional bias: basic and acidic residues; that stretch reads EGQRSEKKRQE. A compositionally biased stretch (polar residues) spans 1648–1666; it reads VSGTEQDTETEVSLVSGQQ. 3 positions are modified to phosphoserine: serine 1660, serine 1675, and serine 1685. The segment covering 1681–1694 has biased composition (basic and acidic residues); it reads VLDRSQARTLDWDK. Residues 1695-1720 are compositionally biased toward polar residues; that stretch reads QGSTAVHPQEATQSSWQEEVTQGPHS.

As to quaternary structure, component of the ankyrin-1 complex in the erythrocyte, composed of ANK1, RHCE, RHAG, SLC4A1, EPB42, GYPA, GYPB and AQP1. Interacts with a number of integral membrane proteins and cytoskeletal proteins. Interacts (via N-terminus) with SPTB/spectrin (beta chain). Also interacts with TTN/titin. Isoform Mu17 interacts with OBSCN isoform 3/obscurin. Interacts with HIF1AN. Interacts (via ANK 1-5 repeats) with RHCE; this interaction mediates the primary membrane attachment site for ANK1. Interacts (via ANK 1-2 repeats) with AQP1 (via the N-terminal). Interacts (via ANK 1-13 repeats) with EPB42. Interacts directly with SLC4A1 (via the cytoplasmic domain); this interaction is mediated by the SLC4A1 Band 3-II and Band 3-III dimers. In terms of processing, regulated by phosphorylation. Post-translationally, acylated by palmitic acid group(s). Hydroxylated by HIF1AN at several asparagine and 1 aspartate residue within ANK repeat region; hydroxylation seems to increase the conformational stability of this region and may also modulate protein-protein interactions mediated by the ANK repeat region.

It is found in the cytoplasm. The protein resides in the cytoskeleton. The protein localises to the membrane. It localises to the sarcoplasmic reticulum. Functionally, component of the ankyrin-1 complex, a multiprotein complex involved in the stability and shape of the erythrocyte membrane. Attaches integral membrane proteins to cytoskeletal elements; binds to the erythrocyte membrane protein band 4.2, to Na-K ATPase, to the lymphocyte membrane protein GP85, and to the cytoskeletal proteins fodrin, tubulin, vimentin and desmin. Erythrocyte ankyrins also link spectrin (beta chain) to the cytoplasmic domain of the erythrocytes anion exchange protein; they retain most or all of these binding functions. This is Ankyrin-1 from Mus musculus (Mouse).